The chain runs to 768 residues: Dual specificity calcium/calmodulin-dependent 3',5'-cyclic nucleotide phosphodiesterase 1C (768 aa).

Met-1 carries the post-translational modification N-acetylmethionine. The segment at Glu-183–Arg-206 is calmodulin-binding. Positions Val-211–Glu-588 constitute a PDEase domain. Residue His-288 is the Proton donor of the active site. Residues His-292, His-328, Asp-329, and Asp-436 each coordinate Zn(2+). Asp-329 lines the Mg(2+) pocket. Disordered regions lie at residues Leu-513–Ser-557 and Lys-584–Arg-719. Composition is skewed to polar residues over residues Glu-516–Ser-536 and Val-543–Ser-557. The segment covering Lys-584 to Ser-614 has biased composition (basic and acidic residues). The segment covering Glu-631–Thr-641 has biased composition (polar residues). Composition is skewed to basic and acidic residues over residues Ser-642–Glu-659 and Asp-665–Lys-692. The segment covering Ser-698–Pro-712 has biased composition (low complexity).

This sequence belongs to the cyclic nucleotide phosphodiesterase family. PDE1 subfamily. In terms of assembly, homodimer. Zn(2+) is required as a cofactor. Requires Mg(2+) as cofactor. As to expression, highly expressed in olfactory epithelium and at moderate levels, in cerebellum, as well as weakly in forebrain, testis, heart and lung. In the olfactory epithelium, expressed by sensory neurons, but not epithelial cells.

It is found in the lysosome. The catalysed reaction is a nucleoside 3',5'-cyclic phosphate + H2O = a nucleoside 5'-phosphate + H(+). The enzyme catalyses 3',5'-cyclic GMP + H2O = GMP + H(+). It catalyses the reaction 3',5'-cyclic AMP + H2O = AMP + H(+). With respect to regulation, type I PDE are activated by the binding of calmodulin in the presence of Ca(2+). Functionally, calmodulin-dependent cyclic nucleotide phosphodiesterase with a dual specificity for the second messengers cAMP and cGMP, which are key regulators of many important physiological processes. Has a high affinity for both cAMP and cGMP. Modulates the amplitude and duration of the cAMP signal in sensory cilia in response to odorant stimulation, hence contributing to the generation of action potentials. Regulates smooth muscle cell proliferation. Regulates the stability of growth factor receptors, including PDGFRB. This Rattus norvegicus (Rat) protein is Dual specificity calcium/calmodulin-dependent 3',5'-cyclic nucleotide phosphodiesterase 1C.